Consider the following 20-residue polypeptide: Fibrinolytic zinc metalloproteinase (20 aa).

A Peptidase M12B domain is found at 7 to 20 (RYVQLVITVDHVMN).

Zn(2+) is required as a cofactor.

The protein resides in the secreted. In terms of biological role, hydrolyzes alpha and beta chains of human fibrinogen and human fibrin. No activity against the gamma chain of human fibrinogen, human thrombin, bovine serum albumin, ovalbumin and hemoglobin. Has anticoagulant activity on human plasma and protects mice against death due from experimentally induced platelet thromboembolism with an ED(50) of 40 ug/kg. The protein is Fibrinolytic zinc metalloproteinase of Ganoderma lucidum (Ling zhi medicinal fungus).